The sequence spans 1014 residues: MICAL-like protein 2 (1014 aa).

Positions 1–107 (MAAIKALQEW…YVSQYYNYFH (107 aa)) constitute a Calponin-homology (CH) domain. The forms an intramolecular interaction with the C-terminal coiled coil domain keeping the protein in a closed conformation stretch occupies residues 1–261 (MAAIKALQEW…KLSNLASRQP (261 aa)). 3 positions are modified to phosphoserine: S110, S144, and S154. Residues 114 to 181 (GMAGMKRPSS…PSPKAAPGTV (68 aa)) form a disordered region. The region spanning 187-249 (SICGVCGKHV…THHSSEAVSV (63 aa)) is the LIM zinc-binding domain. At S250 the chain carries Phosphoserine. The tract at residues 262–394 (GGGIADTRPI…QGQAASKGVK (133 aa)) is necessary and sufficient for interaction with actinins. Residues 262–810 (GGGIADTRPI…QDDQTRSCKE (549 aa)) are mediates targeting to the cell plasma membrane. Disordered regions lie at residues 311–450 (LTPP…SRVP) and 609–780 (TLPK…RRKK). Residues 332 to 355 (STVTTTSANSKATTHVTNSSPVGW) show a composition bias toward polar residues. Residues 356–368 (SSSAQSSTGTSGS) show a composition bias toward low complexity. A compositionally biased stretch (polar residues) spans 384 to 398 (PQGQAASKGVKTQLN). Composition is skewed to low complexity over residues 399–419 (SSTD…SSRT) and 438–447 (PASSSSSHAS). Polar residues-rich tracts occupy residues 624–633 (LSHSTTQAFS) and 646–656 (VGSTSWTSVSL). 2 stretches are compositionally biased toward basic and acidic residues: residues 701–711 (EGWRARLKPVD) and 720–737 (LEQK…DTPR). The segment covering 747–758 (IHITLTPIQQKR) has biased composition (polar residues). A Phosphothreonine modification is found at T759. 2 positions are modified to phosphoserine: S773 and S837. Residues 811 to 918 (KTATWGTRES…LMYKSKDQCL (108 aa)) are forms an intramolecular interaction with the N-terminal Calponin-homology and LIM zinc-binding domains-containing region keeping the protein in a closed conformation. The bMERB domain occupies 838-985 (PVRLHPNYIS…EQEEDQMLES (148 aa)). The stretch at 845-885 (YISQEELQRQLQDIERQLDALELRGVELEKRLRAAEGDASE) forms a coiled coil. Residues 918–1014 (LEERQLDLQG…WSSKSKSGQT (97 aa)) form a mediates interaction with RAB13 and is required for transition from the closed to the open conformation region.

As to quaternary structure, interacts with RAB13 (GTP-bound form); competes with RAB8A and is involved in tight junctions assembly. Interacts with RAB8A; competes with RAB13 and is involved in E-cadherin endocytic recycling. Interacts with RAB8B. Interacts (preferentially in opened conformation) with ACTN1 and ACTN4; stimulated by RAB13 activation. Interacts (via calponin-homology (CH) domain) with the filamins FLNA, FLNB and FLNC (via actin-binding domain).

The protein resides in the cell membrane. Its subcellular location is the cell junction. It localises to the tight junction. The protein localises to the recycling endosome. It is found in the cell projection. The protein resides in the neuron projection. Its subcellular location is the cytoplasm. It localises to the cytoskeleton. In terms of biological role, effector of small Rab GTPases which is involved in junctional complexes assembly through the regulation of cell adhesion molecules transport to the plasma membrane and actin cytoskeleton reorganization. Regulates the endocytic recycling of occludins, claudins and E-cadherin to the plasma membrane and may thereby regulate the establishment of tight junctions and adherens junctions. In parallel, may regulate actin cytoskeleton reorganization directly through interaction with F-actin or indirectly through actinins and filamins. Most probably involved in the processes of epithelial cell differentiation, cell spreading and neurite outgrowth. Undergoes liquid-liquid phase separation to form tubular recycling endosomes. Plays 2 sequential roles in the biogenesis of tubular recycling endosomes: first organizes phase separation and then the closed form formed by interaction with RAB8A promotes endosomal tubulation. The sequence is that of MICAL-like protein 2 (Micall2) from Rattus norvegicus (Rat).